Here is a 59-residue protein sequence, read N- to C-terminus: UPF0434 protein VIBHAR_01537 (59 aa).

This sequence belongs to the UPF0434 family.

In Vibrio campbellii (strain ATCC BAA-1116), this protein is UPF0434 protein VIBHAR_01537.